The chain runs to 241 residues: Thiamine import ATP-binding protein ThiQ (241 aa).

The ABC transporter domain maps to 7-235 (IRLSDVRFSY…AGPEALRHYI (229 aa)). 37–44 (GPSGSGKS) lines the ATP pocket.

This sequence belongs to the ABC transporter superfamily. Thiamine importer (TC 3.A.1.19.1) family. As to quaternary structure, the complex is composed of two ATP-binding proteins (ThiQ), two transmembrane proteins (ThiP) and a solute-binding protein (ThiB).

The protein localises to the cell inner membrane. The enzyme catalyses thiamine(out) + ATP + H2O = thiamine(in) + ADP + phosphate + H(+). Part of the ABC transporter complex ThiBPQ involved in thiamine import. Responsible for energy coupling to the transport system. The protein is Thiamine import ATP-binding protein ThiQ of Brucella abortus biovar 1 (strain 9-941).